The following is a 334-amino-acid chain: Cytosolic Fe-S cluster assembly factor NBP35 (334 aa).

Residues cysteine 33, cysteine 47, cysteine 50, and cysteine 56 each contribute to the [4Fe-4S] cluster site. Residue 86 to 93 (GKGGVGKS) participates in ATP binding. [4Fe-4S] cluster is bound by residues cysteine 259 and cysteine 262.

This sequence belongs to the Mrp/NBP35 ATP-binding proteins family. NUBP1/NBP35 subfamily. In terms of assembly, heterotetramer of 2 NBP35 and 2 CFD1 chains. [4Fe-4S] cluster serves as cofactor.

Its subcellular location is the cytoplasm. It localises to the nucleus. In terms of biological role, component of the cytosolic iron-sulfur (Fe/S) protein assembly (CIA) machinery. Required for maturation of extramitochondrial Fe-S proteins. The NBP35-CFD1 heterotetramer forms a Fe-S scaffold complex, mediating the de novo assembly of an Fe-S cluster and its transfer to target apoproteins. Required for biogenesis and export of both ribosomal subunits, which may reflect a role in assembly of the Fe/S clusters in RLI1, a protein which performs rRNA processing and ribosome export. The protein is Cytosolic Fe-S cluster assembly factor NBP35 of Candida glabrata (strain ATCC 2001 / BCRC 20586 / JCM 3761 / NBRC 0622 / NRRL Y-65 / CBS 138) (Yeast).